Here is a 230-residue protein sequence, read N- to C-terminus: Large ribosomal subunit protein uL1 (230 aa).

The protein belongs to the universal ribosomal protein uL1 family. Part of the 50S ribosomal subunit.

Functionally, binds directly to 23S rRNA. The L1 stalk is quite mobile in the ribosome, and is involved in E site tRNA release. In terms of biological role, protein L1 is also a translational repressor protein, it controls the translation of the L11 operon by binding to its mRNA. This is Large ribosomal subunit protein uL1 from Bifidobacterium adolescentis (strain ATCC 15703 / DSM 20083 / NCTC 11814 / E194a).